The primary structure comprises 178 residues: Protamine-like protein (178 aa).

Disordered regions lie at residues 1-27 (PSTT…TVSD) and 77-178 (SVVK…RAKK). Composition is skewed to basic residues over residues 8 to 21 (SPKR…RKRT) and 94 to 178 (PRRR…RAKK). One can recognise an H15 domain in the interval 21–89 (TGPTVSDLIL…KAKGFYKLNK (69 aa)).

As to expression, male germ cells.

It localises to the nucleus. The protein localises to the chromosome. In terms of biological role, replaces histones in the chromatin of sperm during the haploid phase of spermatogenesis. Compacts sperm DNA into a highly condensed, stable and inactive complex. This is Protamine-like protein from Mullus surmuletus (Striped red mullet).